The primary structure comprises 276 residues: Imidazole glycerol phosphate synthase subunit HisF (276 aa).

Active-site residues include Asp11 and Asp130.

The protein belongs to the HisA/HisF family. Heterodimer of HisH and HisF.

It localises to the cytoplasm. It catalyses the reaction 5-[(5-phospho-1-deoxy-D-ribulos-1-ylimino)methylamino]-1-(5-phospho-beta-D-ribosyl)imidazole-4-carboxamide + L-glutamine = D-erythro-1-(imidazol-4-yl)glycerol 3-phosphate + 5-amino-1-(5-phospho-beta-D-ribosyl)imidazole-4-carboxamide + L-glutamate + H(+). It participates in amino-acid biosynthesis; L-histidine biosynthesis; L-histidine from 5-phospho-alpha-D-ribose 1-diphosphate: step 5/9. Its function is as follows. IGPS catalyzes the conversion of PRFAR and glutamine to IGP, AICAR and glutamate. The HisF subunit catalyzes the cyclization activity that produces IGP and AICAR from PRFAR using the ammonia provided by the HisH subunit. The chain is Imidazole glycerol phosphate synthase subunit HisF from Beijerinckia indica subsp. indica (strain ATCC 9039 / DSM 1715 / NCIMB 8712).